Consider the following 65-residue polypeptide: Large ribosomal subunit protein bL35 (65 aa).

The protein belongs to the bacterial ribosomal protein bL35 family.

This Wolbachia sp. subsp. Brugia malayi (strain TRS) protein is Large ribosomal subunit protein bL35.